The chain runs to 230 residues: MTGRDSASSDITPEVLLRAYACGIFPMAESVDDPTLFWVEPERRGIIPLDGFKVASRLARTVRSDVFTVSVDRAFKQVIDGCAAPQPGREDTWINRRIRELYIGLYQLGHCHSVEVWQNDDLVGGLYGVNLGRAFFGESMFHRARDASKVALVHLVARLIEGGFVLLDTQFVTEHLRTFGATEVPRRRYRAMLDVAITGAADFARLPTEQPIAGTRALAIISGREGLGRG.

The protein belongs to the L/F-transferase family.

It localises to the cytoplasm. The catalysed reaction is N-terminal L-lysyl-[protein] + L-leucyl-tRNA(Leu) = N-terminal L-leucyl-L-lysyl-[protein] + tRNA(Leu) + H(+). It catalyses the reaction N-terminal L-arginyl-[protein] + L-leucyl-tRNA(Leu) = N-terminal L-leucyl-L-arginyl-[protein] + tRNA(Leu) + H(+). The enzyme catalyses L-phenylalanyl-tRNA(Phe) + an N-terminal L-alpha-aminoacyl-[protein] = an N-terminal L-phenylalanyl-L-alpha-aminoacyl-[protein] + tRNA(Phe). Functionally, functions in the N-end rule pathway of protein degradation where it conjugates Leu, Phe and, less efficiently, Met from aminoacyl-tRNAs to the N-termini of proteins containing an N-terminal arginine or lysine. The polypeptide is Leucyl/phenylalanyl-tRNA--protein transferase (Rhodopseudomonas palustris (strain BisB18)).